Consider the following 593-residue polypeptide: Genetic interactor of prohibitins 3, mitochondrial (593 aa).

Residues 1–61 constitute a mitochondrion transit peptide; it reads MLGRIRPFVR…NPSKPGFYRP (61 aa). The 208-residue stretch at 142 to 349 folds into the CP-type G domain; sequence VESIDKIMST…IVDVPGFSAN (208 aa).

It belongs to the TRAFAC class YlqF/YawG GTPase family. GEP3 subfamily.

It localises to the mitochondrion. May be involved in the mitochondrial lipid metabolism. This chain is Genetic interactor of prohibitins 3, mitochondrial (GEP3), found in Debaryomyces hansenii (strain ATCC 36239 / CBS 767 / BCRC 21394 / JCM 1990 / NBRC 0083 / IGC 2968) (Yeast).